Consider the following 314-residue polypeptide: Deoxyribonuclease-1-like 1 (314 aa).

Positions 1–37 (MPFGQPGFLWRVPDAHIAMRGLVMAPLLILLVGGTEA) are cleaved as a signal peptide. N-linked (GlcNAc...) asparagine glycosylation occurs at asparagine 102. Glutamate 113 is a catalytic residue. The N-linked (GlcNAc...) asparagine glycan is linked to asparagine 133. Histidine 164 is a catalytic residue. Residues cysteine 203 and cysteine 240 are joined by a disulfide bond. Asparagine 239 carries N-linked (GlcNAc...) asparagine glycosylation.

Belongs to the DNase I family. In terms of tissue distribution, highly expressed in heart and skeletal muscles. Low expression in brain and thymus. Intermediated expression in other tissues.

The protein resides in the endoplasmic reticulum. The chain is Deoxyribonuclease-1-like 1 (Dnase1l1) from Mus musculus (Mouse).